The chain runs to 515 residues: Histidine ammonia-lyase (515 aa).

The 5-imidazolinone (Ala-Gly) cross-link spans 142–144 (ASG). A 2,3-didehydroalanine (Ser) modification is found at Ser-143.

Belongs to the PAL/histidase family. Contains an active site 4-methylidene-imidazol-5-one (MIO), which is formed autocatalytically by cyclization and dehydration of residues Ala-Ser-Gly.

It localises to the cytoplasm. It catalyses the reaction L-histidine = trans-urocanate + NH4(+). The protein operates within amino-acid degradation; L-histidine degradation into L-glutamate; N-formimidoyl-L-glutamate from L-histidine: step 1/3. This is Histidine ammonia-lyase from Bradyrhizobium sp. (strain ORS 278).